The sequence spans 315 residues: Glutathione synthetase (315 aa).

In terms of domain architecture, ATP-grasp spans 125 to 310 (KLYTAWFADL…ITGMLMDAIE (186 aa)). An ATP-binding site is contributed by 151–207 (WEKHGDIIMKPLDGMGGASIFRVKEGDPNIGVIAETLTELGNRYCMAQNYLPAIKDG). Residues Glu281 and Asn283 each contribute to the Mg(2+) site.

The protein belongs to the prokaryotic GSH synthase family. The cofactor is Mg(2+). Mn(2+) serves as cofactor.

The catalysed reaction is gamma-L-glutamyl-L-cysteine + glycine + ATP = glutathione + ADP + phosphate + H(+). It functions in the pathway sulfur metabolism; glutathione biosynthesis; glutathione from L-cysteine and L-glutamate: step 2/2. This is Glutathione synthetase from Salmonella typhi.